Here is a 151-residue protein sequence, read N- to C-terminus: MATIESKLVEMLTVPVEALGFKLWGIEYIQAGRHSILRVFIDHENGINIEDCAEASRQVSAVMDVEDPISTEYTLEVSSPGVDRPLFTAEQYRAYIGEETKVQLTMPVAGSRNLKGVISSVDGQMLTITVDGKDLIVALDNIRKGNVIAKF.

It belongs to the RimP family.

Its subcellular location is the cytoplasm. In terms of biological role, required for maturation of 30S ribosomal subunits. The protein is Ribosome maturation factor RimP of Shewanella frigidimarina (strain NCIMB 400).